The chain runs to 570 residues: Proline--tRNA ligase (570 aa).

Belongs to the class-II aminoacyl-tRNA synthetase family. ProS type 1 subfamily. As to quaternary structure, homodimer.

Its subcellular location is the cytoplasm. The catalysed reaction is tRNA(Pro) + L-proline + ATP = L-prolyl-tRNA(Pro) + AMP + diphosphate. Catalyzes the attachment of proline to tRNA(Pro) in a two-step reaction: proline is first activated by ATP to form Pro-AMP and then transferred to the acceptor end of tRNA(Pro). As ProRS can inadvertently accommodate and process non-cognate amino acids such as alanine and cysteine, to avoid such errors it has two additional distinct editing activities against alanine. One activity is designated as 'pretransfer' editing and involves the tRNA(Pro)-independent hydrolysis of activated Ala-AMP. The other activity is designated 'posttransfer' editing and involves deacylation of mischarged Ala-tRNA(Pro). The misacylated Cys-tRNA(Pro) is not edited by ProRS. This Neisseria meningitidis serogroup C / serotype 2a (strain ATCC 700532 / DSM 15464 / FAM18) protein is Proline--tRNA ligase.